Reading from the N-terminus, the 516-residue chain is Na(+)/H(+) antiporter NhaB (516 aa).

A run of 12 helical transmembrane segments spans residues 23–43 (LALI…PFVA), 61–80 (CYPL…IGMT), 97–117 (LLLM…LFVF), 120–140 (LLLG…AAAF), 144–164 (FLDA…FYGI), 202–222 (LMMH…VGEP), 238–258 (FFLR…LTCL), 303–323 (ALIG…VGLI), 348–368 (TEAL…AVII), 391–411 (LFYL…VGTV), 447–467 (ATPN…APLI), and 475–495 (VWMA…CVEF).

It belongs to the NhaB Na(+)/H(+) (TC 2.A.34) antiporter family.

It localises to the cell inner membrane. It catalyses the reaction 2 Na(+)(in) + 3 H(+)(out) = 2 Na(+)(out) + 3 H(+)(in). In terms of biological role, na(+)/H(+) antiporter that extrudes sodium in exchange for external protons. The polypeptide is Na(+)/H(+) antiporter NhaB (Klebsiella pneumoniae subsp. pneumoniae (strain ATCC 700721 / MGH 78578)).